The sequence spans 149 residues: Transcriptional repressor NrdR (149 aa).

A zinc finger lies at Cys-3–Cys-34. In terms of domain architecture, ATP-cone spans Pro-49–Glu-139.

Belongs to the NrdR family. Zn(2+) serves as cofactor.

Functionally, negatively regulates transcription of bacterial ribonucleotide reductase nrd genes and operons by binding to NrdR-boxes. The polypeptide is Transcriptional repressor NrdR (Polaromonas sp. (strain JS666 / ATCC BAA-500)).